The chain runs to 274 residues: tRNA-cytidine(32) 2-sulfurtransferase (274 aa).

The PP-loop motif signature appears at 40 to 45 (SGGKDS). [4Fe-4S] cluster is bound by residues C115, C118, and C206.

This sequence belongs to the TtcA family. As to quaternary structure, homodimer. It depends on Mg(2+) as a cofactor. [4Fe-4S] cluster serves as cofactor.

The protein localises to the cytoplasm. The enzyme catalyses cytidine(32) in tRNA + S-sulfanyl-L-cysteinyl-[cysteine desulfurase] + AH2 + ATP = 2-thiocytidine(32) in tRNA + L-cysteinyl-[cysteine desulfurase] + A + AMP + diphosphate + H(+). It participates in tRNA modification. Catalyzes the ATP-dependent 2-thiolation of cytidine in position 32 of tRNA, to form 2-thiocytidine (s(2)C32). The sulfur atoms are provided by the cysteine/cysteine desulfurase (IscS) system. This chain is tRNA-cytidine(32) 2-sulfurtransferase, found in Pseudomonas entomophila (strain L48).